Consider the following 263-residue polypeptide: Phosphonoacetaldehyde hydrolase (263 aa).

Residue Asp10 is the Nucleophile of the active site. Mg(2+)-binding residues include Asp10 and Ala12. The active-site Schiff-base intermediate with substrate is the Lys51. A Mg(2+)-binding site is contributed by Asp184.

Belongs to the HAD-like hydrolase superfamily. PhnX family. As to quaternary structure, homodimer. The cofactor is Mg(2+).

It carries out the reaction phosphonoacetaldehyde + H2O = acetaldehyde + phosphate + H(+). Its function is as follows. Involved in phosphonate degradation. This chain is Phosphonoacetaldehyde hydrolase, found in Bacteroides fragilis (strain ATCC 25285 / DSM 2151 / CCUG 4856 / JCM 11019 / LMG 10263 / NCTC 9343 / Onslow / VPI 2553 / EN-2).